The primary structure comprises 344 residues: MIMNHSLLPFHTFHLPACANQIIEFTTVSQLITEWQKATRADQAVLILGQGSNVLFLDDFNGVVLVNKLKGIQHREDHDYHYIQAQGGENWHNLVEWTLAKNIAGLENLALIPGVVGSAPIQNIGAYGVEFEQFCDFVEVVNLANGQIFRLDKQACQFGYRDSVFKHQYRHSFAIISVGLKLAKAWTPTLNYGSLVKFSADTVTSQQIFDEVCAIRSSKLPDPDEYGNAGSFFKNPIIDATTFAEIQTAFPQIPYYPQPDGNIKLAAGWLIDQCELKGFQIGGAAVHTQQALVLINKAHATGRQVVELAQQVRRRVRHKFNVELHPEVRFIGQTGEVDSEEITR.

Positions 15–185 constitute an FAD-binding PCMH-type domain; sequence LPACANQIIE…ISVGLKLAKA (171 aa). Residue Arg161 is part of the active site. Ser231 (proton donor) is an active-site residue. The active site involves Glu327.

This sequence belongs to the MurB family. FAD serves as cofactor.

Its subcellular location is the cytoplasm. It catalyses the reaction UDP-N-acetyl-alpha-D-muramate + NADP(+) = UDP-N-acetyl-3-O-(1-carboxyvinyl)-alpha-D-glucosamine + NADPH + H(+). Its pathway is cell wall biogenesis; peptidoglycan biosynthesis. In terms of biological role, cell wall formation. The chain is UDP-N-acetylenolpyruvoylglucosamine reductase from Haemophilus ducreyi (strain 35000HP / ATCC 700724).